The sequence spans 173 residues: ATP synthase subunit b 1 (173 aa).

Residues 15-37 traverse the membrane as a helical segment; that stretch reads TFWVTVAVLIFLAFFGRKIVGAI.

The protein belongs to the ATPase B chain family. F-type ATPases have 2 components, F(1) - the catalytic core - and F(0) - the membrane proton channel. F(1) has five subunits: alpha(3), beta(3), gamma(1), delta(1), epsilon(1). F(0) has three main subunits: a(1), b(2) and c(10-14). The alpha and beta chains form an alternating ring which encloses part of the gamma chain. F(1) is attached to F(0) by a central stalk formed by the gamma and epsilon chains, while a peripheral stalk is formed by the delta and b chains.

The protein localises to the cell inner membrane. In terms of biological role, f(1)F(0) ATP synthase produces ATP from ADP in the presence of a proton or sodium gradient. F-type ATPases consist of two structural domains, F(1) containing the extramembraneous catalytic core and F(0) containing the membrane proton channel, linked together by a central stalk and a peripheral stalk. During catalysis, ATP synthesis in the catalytic domain of F(1) is coupled via a rotary mechanism of the central stalk subunits to proton translocation. Functionally, component of the F(0) channel, it forms part of the peripheral stalk, linking F(1) to F(0). This is ATP synthase subunit b 1 from Acidiphilium cryptum (strain JF-5).